Reading from the N-terminus, the 307-residue chain is MWVRTTITVKRWTEERSGRKIERTERTDITRLPSWKRGYPASVDSSSDLFSFSEGENKETDRRCWKHQHCPGHTIHPFSDCGHHNRCMHAVSQCDCESRCRSHRPVSVAIIYHPTHHMYMTDDDLEENWVSRKNHLSPSARPPDPNTGSATEVPDLSVPITIWRSESPIEKCQESNVIKDIKRKEKEQDEEEMVDEKANLKKKAKGKLTKKKTPVKSESSPADLSQSVRGPVRTPESSPESPGGLESEYSCERGKERPSSEDVVESLSPRKKEKTSSGQAKKNGTKKETQKTSKRKKSSPVPNPNLS.

2 disordered regions span residues 134–155 (NHLS…EVPD) and 183–307 (RKEK…PNLS). The segment covering 200 to 214 (LKKKAKGKLTKKKTP) has biased composition (basic residues). The span at 216-228 (KSESSPADLSQSV) shows a compositional bias: polar residues. Ser220 is modified (phosphoserine). The span at 235-248 (PESSPESPGGLESE) shows a compositional bias: low complexity. A phosphoserine mark is found at Ser250, Ser259, Ser260, Ser298, and Ser307. The span at 250–260 (SCERGKERPSS) shows a compositional bias: basic and acidic residues.

It belongs to the PROCA1 family.

This chain is Protein PROCA1 (Proca1), found in Mus musculus (Mouse).